Reading from the N-terminus, the 707-residue chain is Ribosomal RNA large subunit methyltransferase K/L (707 aa).

The THUMP domain maps to 44-155 (VIYNLCLWSR…NDILTVSFDL (112 aa)).

This sequence belongs to the methyltransferase superfamily. RlmKL family.

The protein resides in the cytoplasm. The catalysed reaction is guanosine(2445) in 23S rRNA + S-adenosyl-L-methionine = N(2)-methylguanosine(2445) in 23S rRNA + S-adenosyl-L-homocysteine + H(+). The enzyme catalyses guanosine(2069) in 23S rRNA + S-adenosyl-L-methionine = N(2)-methylguanosine(2069) in 23S rRNA + S-adenosyl-L-homocysteine + H(+). Specifically methylates the guanine in position 2445 (m2G2445) and the guanine in position 2069 (m7G2069) of 23S rRNA. This chain is Ribosomal RNA large subunit methyltransferase K/L, found in Legionella pneumophila (strain Lens).